Reading from the N-terminus, the 256-residue chain is DNA repair protein RecO (256 aa).

It belongs to the RecO family.

In terms of biological role, involved in DNA repair and RecF pathway recombination. The polypeptide is DNA repair protein RecO (Anaeromyxobacter sp. (strain Fw109-5)).